A 780-amino-acid chain; its full sequence is ATP-dependent 6-phosphofructokinase, muscle type (780 aa).

The residue at position 2 (T2) is an N-acetylthreonine. The interval 2 to 390 is N-terminal catalytic PFK domain 1; sequence THEEHHAAKT…NWEVYKLLAH (389 aa). Residues G25, 88–89, and 118–121 each bind ATP; these read RC and GDGS. Residue D119 participates in Mg(2+) binding. A Phosphoserine modification is found at S133. Residues 164 to 166, R201, 208 to 210, E264, R292, and 298 to 301 contribute to the substrate site; these read SID, MGR, and HVQR. D166 acts as the Proton acceptor in catalysis. A Phosphoserine modification is found at S377. Positions 391 to 401 are interdomain linker; that stretch reads IRPPVSKSGSH. Positions 402–780 are C-terminal regulatory PFK domain 2; that stretch reads TVAVMNVGAP…SRKRSGEAPA (379 aa). Beta-D-fructose 2,6-bisphosphate-binding positions include R471 and 528-532; that span reads TVSNN. O-linked (GlcNAc) serine glycosylation is present at S530. N6-(2-hydroxyisobutyryl)lysine is present on K557. Beta-D-fructose 2,6-bisphosphate is bound by residues R566, 573–575, E629, R655, and 661–664; these read MGG and HMQQ. Residue S667 is modified to Phosphoserine. Beta-D-fructose 2,6-bisphosphate is bound at residue R735. Residue S775 is modified to Phosphoserine.

The protein belongs to the phosphofructokinase type A (PFKA) family. ATP-dependent PFK group I subfamily. Eukaryotic two domain clade 'E' sub-subfamily. As to quaternary structure, homo- and heterotetramers. Phosphofructokinase (PFK) enzyme functions as a tetramer composed of different combinations of 3 types of subunits, called PFKM (M), PFKL (L) and PFKP (P). The composition of the PFK tetramer differs according to the tissue type it is present in. The kinetic and regulatory properties of the tetrameric enzyme are dependent on the subunit composition, hence can vary across tissues. Interacts (via C-terminus) with HK1 (via N-terminal spermatogenic cell-specific region). Mg(2+) is required as a cofactor. Post-translationally, glcNAcylation decreases enzyme activity.

The protein localises to the cytoplasm. It carries out the reaction beta-D-fructose 6-phosphate + ATP = beta-D-fructose 1,6-bisphosphate + ADP + H(+). Its pathway is carbohydrate degradation; glycolysis; D-glyceraldehyde 3-phosphate and glycerone phosphate from D-glucose: step 3/4. Allosterically activated by ADP, AMP, or fructose 2,6-bisphosphate, and allosterically inhibited by ATP or citrate. In terms of biological role, catalyzes the phosphorylation of D-fructose 6-phosphate to fructose 1,6-bisphosphate by ATP, the first committing step of glycolysis. This is ATP-dependent 6-phosphofructokinase, muscle type (PFKM) from Equus caballus (Horse).